The chain runs to 78 residues: MSTIEERVKKIVAEQLGVKEEEVTNSASFVEDLGADSLDTVELVMALEEEFETEIPDEQAEKITTVQEAIDYINAHAQ.

In terms of domain architecture, Carrier spans 2-77 (STIEERVKKI…EAIDYINAHA (76 aa)). Ser-37 bears the O-(pantetheine 4'-phosphoryl)serine mark.

This sequence belongs to the acyl carrier protein (ACP) family. Post-translationally, 4'-phosphopantetheine is transferred from CoA to a specific serine of apo-ACP by AcpS. This modification is essential for activity because fatty acids are bound in thioester linkage to the sulfhydryl of the prosthetic group.

It localises to the cytoplasm. Its pathway is lipid metabolism; fatty acid biosynthesis. Its function is as follows. Carrier of the growing fatty acid chain in fatty acid biosynthesis. This chain is Acyl carrier protein, found in Stutzerimonas stutzeri (strain A1501) (Pseudomonas stutzeri).